A 621-amino-acid chain; its full sequence is Hemolysin ahh1 (621 aa).

An N-terminal signal peptide occupies residues 1 to 30 (MKNKKPRKFITQAPTLSLLALALLAGSVQA). The Ricin B-type lectin domain occupies 491–610 (RPVNLQLGGF…QNVSVRTLTS (120 aa)).

The protein belongs to the HlyA hemolysin family.

Bacterial hemolysins are exotoxins that attack blood cell membranes and cause cell rupture by mechanisms not clearly defined. The sequence is that of Hemolysin ahh1 (ahh1) from Aeromonas hydrophila subsp. hydrophila (strain ATCC 7966 / DSM 30187 / BCRC 13018 / CCUG 14551 / JCM 1027 / KCTC 2358 / NCIMB 9240 / NCTC 8049).